A 212-amino-acid chain; its full sequence is Thymidylate kinase (212 aa).

7 to 14 contributes to the ATP binding site; that stretch reads GIEGCGKS.

The protein belongs to the thymidylate kinase family.

The catalysed reaction is dTMP + ATP = dTDP + ADP. In terms of biological role, phosphorylation of dTMP to form dTDP in both de novo and salvage pathways of dTTP synthesis. This Trichlorobacter lovleyi (strain ATCC BAA-1151 / DSM 17278 / SZ) (Geobacter lovleyi) protein is Thymidylate kinase.